The chain runs to 246 residues: Uridylate kinase (246 aa).

Position 10–13 (10–13) interacts with ATP; the sequence is KLSG. G52 lines the UMP pocket. ATP contacts are provided by G53 and R57. Residues D72 and 133–140 each bind UMP; that span reads TGNPFFTT. 3 residues coordinate ATP: T160, Y166, and D169.

Belongs to the UMP kinase family. Homohexamer.

It localises to the cytoplasm. It carries out the reaction UMP + ATP = UDP + ADP. The protein operates within pyrimidine metabolism; CTP biosynthesis via de novo pathway; UDP from UMP (UMPK route): step 1/1. With respect to regulation, inhibited by UTP. Its function is as follows. Catalyzes the reversible phosphorylation of UMP to UDP. This Halorhodospira halophila (strain DSM 244 / SL1) (Ectothiorhodospira halophila (strain DSM 244 / SL1)) protein is Uridylate kinase.